Reading from the N-terminus, the 203-residue chain is RNA annealing protein YRA2 (203 aa).

Methionine 1 is modified (N-acetylmethionine). Disordered regions lie at residues 1 to 60 (MDKA…REEP) and 137 to 203 (QPQR…YMKG). Residues 11-20 (NSHTDSSSNH) show a composition bias toward polar residues. Residues 47–60 (SRSKDRLYREREEP) show a composition bias toward basic and acidic residues. Residues 64 to 138 (KRIRISKIPL…AKIEVEIYQP (75 aa)) form the RRM domain. Basic residues-rich tracts occupy residues 139 to 153 (QRKH…RRKQ) and 163 to 180 (PGSH…KNKG).

It belongs to the YRA1 family. Associates with mRNPs. Interacts with YRA1.

It localises to the nucleus. Involved in export of poly(A) mRNAs from the nucleus. Recruited to the coding sequences as well as poly-A sites of active genes. This chain is RNA annealing protein YRA2 (YRA2), found in Saccharomyces cerevisiae (strain Lalvin EC1118 / Prise de mousse) (Baker's yeast).